Reading from the N-terminus, the 389-residue chain is uncharacterized protein (389 aa).

WD repeat units lie at residues 11-53 (SFGS…QKIK), 146-186 (SHHD…EEDA), and 289-330 (AHGD…LDIP). Residue S351 is modified to Phosphoserine. Residues 361 to 389 (QKESVSTRPRKEKHKKAKKHSMKSRFKPY) form a disordered region. Over residues 368–389 (RPRKEKHKKAKKHSMKSRFKPY) the composition is skewed to basic residues.

This is an uncharacterized protein from Saccharomyces cerevisiae (strain ATCC 204508 / S288c) (Baker's yeast).